We begin with the raw amino-acid sequence, 114 residues long: UPF0145 protein STK_10800 (114 aa).

Belongs to the UPF0145 family.

The polypeptide is UPF0145 protein STK_10800 (Sulfurisphaera tokodaii (strain DSM 16993 / JCM 10545 / NBRC 100140 / 7) (Sulfolobus tokodaii)).